The sequence spans 504 residues: Alpha-L-arabinofuranosidase C (504 aa).

N-linked (GlcNAc...) asparagine glycosylation is found at Asn-81, Asn-152, Asn-269, and Asn-329.

This sequence belongs to the glycosyl hydrolase 51 family.

It localises to the secreted. The catalysed reaction is Hydrolysis of terminal non-reducing alpha-L-arabinofuranoside residues in alpha-L-arabinosides.. It functions in the pathway glycan metabolism; L-arabinan degradation. Its function is as follows. Alpha-L-arabinofuranosidase involved in the degradation of arabinoxylan, a major component of plant hemicellulose. Acts only on small linear 1,5-alpha-linked L-arabinofuranosyl oligosaccharides. This is Alpha-L-arabinofuranosidase C (abfC) from Emericella nidulans (strain FGSC A4 / ATCC 38163 / CBS 112.46 / NRRL 194 / M139) (Aspergillus nidulans).